A 114-amino-acid polypeptide reads, in one-letter code: Large ribosomal subunit protein bL19 (114 aa).

This sequence belongs to the bacterial ribosomal protein bL19 family.

In terms of biological role, this protein is located at the 30S-50S ribosomal subunit interface and may play a role in the structure and function of the aminoacyl-tRNA binding site. This is Large ribosomal subunit protein bL19 from Lactococcus lactis subsp. cremoris (strain MG1363).